The following is a 217-amino-acid chain: 3,4-dihydroxy-2-butanone 4-phosphate synthase (217 aa).

Residues 37-38 (RE), Asp42, 150-154 (RRGHT), and Glu174 each bind D-ribulose 5-phosphate. A Mg(2+)-binding site is contributed by Glu38. A Mg(2+)-binding site is contributed by His153.

Belongs to the DHBP synthase family. As to quaternary structure, homodimer. The cofactor is Mg(2+). Requires Mn(2+) as cofactor.

It catalyses the reaction D-ribulose 5-phosphate = (2S)-2-hydroxy-3-oxobutyl phosphate + formate + H(+). Its pathway is cofactor biosynthesis; riboflavin biosynthesis; 2-hydroxy-3-oxobutyl phosphate from D-ribulose 5-phosphate: step 1/1. Its function is as follows. Catalyzes the conversion of D-ribulose 5-phosphate to formate and 3,4-dihydroxy-2-butanone 4-phosphate. The protein is 3,4-dihydroxy-2-butanone 4-phosphate synthase of Shewanella sp. (strain MR-4).